We begin with the raw amino-acid sequence, 228 residues long: Uracil-DNA glycosylase (228 aa).

The Proton acceptor role is filled by Asp-64.

Belongs to the uracil-DNA glycosylase (UDG) superfamily. UNG family. As to quaternary structure, monomer.

The protein localises to the cytoplasm. The catalysed reaction is Hydrolyzes single-stranded DNA or mismatched double-stranded DNA and polynucleotides, releasing free uracil.. Functionally, excises uracil residues from the DNA which can arise as a result of misincorporation of dUMP residues by DNA polymerase or due to deamination of cytosine. The protein is Uracil-DNA glycosylase of Escherichia coli O6:H1 (strain CFT073 / ATCC 700928 / UPEC).